The chain runs to 518 residues: Putative N-acetylmuramoyl-L-alanine amidase YrvJ (518 aa).

The N-terminal stretch at 1 to 27 (MNKKYFVLIVCIIFTSALFPTFSSVTA) is a signal peptide. SH3b domains follow at residues 29 to 91 (QGEA…ITKE), 102 to 164 (SDTV…TSGG), 181 to 243 (STTG…LTSS), and 258 to 320 (AKKA…VQTS). Disordered regions lie at residues 94–121 (ASTS…PGTS) and 160–186 (VTSG…TGTV). Low complexity-rich tracts occupy residues 95-108 (STSS…VTST) and 160-169 (VTSGGSSSAS). The interval 322 to 352 (SAEEAGEPPVSDSPSGNGSLNNKTIIVDPGH) is disordered. Over residues 333-345 (DSPSGNGSLNNKT) the composition is skewed to polar residues. One can recognise a MurNAc-LAA domain in the interval 346–514 (IIVDPGHGGK…VTDGIESGLE (169 aa)).

It belongs to the N-acetylmuramoyl-L-alanine amidase 3 family.

The protein resides in the secreted. Its subcellular location is the cell wall. It catalyses the reaction Hydrolyzes the link between N-acetylmuramoyl residues and L-amino acid residues in certain cell-wall glycopeptides.. Functionally, probably involved in cell-wall metabolism. This is Putative N-acetylmuramoyl-L-alanine amidase YrvJ (yrvJ) from Bacillus subtilis (strain 168).